The sequence spans 90 residues: Putative toxin RelE1 (90 aa).

The protein belongs to the RelE toxin family.

In terms of biological role, toxic component of a type II toxin-antitoxin (TA) system. Its cognate antitoxin is RelB1 (Potential). This Methanocaldococcus jannaschii (strain ATCC 43067 / DSM 2661 / JAL-1 / JCM 10045 / NBRC 100440) (Methanococcus jannaschii) protein is Putative toxin RelE1 (relE1).